The following is a 592-amino-acid chain: RNA-binding protein 47 (592 aa).

Residues 1–24 (MTAEDAAAAMSSDSAAGGAASAKA) show a composition bias toward low complexity. The disordered stretch occupies residues 1 to 26 (MTAEDAAAAMSSDSAAGGAASAKAPE). RRM domains are found at residues 73–151 (CEVF…CSVD), 153–235 (CRLF…WAEP), and 248–320 (KILY…LAKP). An asymmetric dimethylarginine; alternate mark is found at Arg-397 and Arg-408. 2 positions are modified to omega-N-methylarginine; alternate: Arg-397 and Arg-408.

The protein belongs to the RRM RBM47 family. As to quaternary structure, homodimer. Interacts with A1CF. Interacts with APOBEC1; form an mRNA editing complex. Interacts with RBPMS.

It localises to the nucleus. It is found in the cytoplasm. Its function is as follows. Single-stranded RNA-binding protein that functions in a variety of RNA processes, including alternative splicing, RNA stabilization, and RNA editing. Functions as an enzyme-substrate adapter for the cytidine deaminase APOBEC1. With APOBEC1 forms an mRNA editing complex involved into cytidine to uridine editing of a variety of mRNA molecules. Through the binding of their 3'UTR, also stabilizes a variety of mRNAs and regulates the expression of genes such as the interferon alpha/beta receptor and interleukin-10. Also involved in the alternative splicing of several genes including TJP1. Binds the pre-mRNA (U)GCAUG consensus sequences in downstream intronic regions of alternative exons, regulating their exclusion and inclusion into mRNAs. Independently of its RNA-binding activity, could negatively regulate MAVS by promoting its lysosomal degradation. In Canis lupus familiaris (Dog), this protein is RNA-binding protein 47.